The primary structure comprises 322 residues: Phosphatidylserine decarboxylase proenzyme (322 aa).

Residues D90, H147, and S254 each act as charge relay system; for autoendoproteolytic cleavage activity in the active site. S254 functions as the Schiff-base intermediate with substrate; via pyruvic acid; for decarboxylase activity in the catalytic mechanism. S254 is subject to Pyruvic acid (Ser); by autocatalysis. Positions 297–322 are disordered; the sequence is PAPLPAEEIKAEHDASPLVDNKKDDT. Over residues 303–322 the composition is skewed to basic and acidic residues; the sequence is EEIKAEHDASPLVDNKKDDT.

This sequence belongs to the phosphatidylserine decarboxylase family. PSD-B subfamily. Prokaryotic type I sub-subfamily. As to quaternary structure, heterodimer of a large membrane-associated beta subunit and a small pyruvoyl-containing alpha subunit. Pyruvate serves as cofactor. In terms of processing, is synthesized initially as an inactive proenzyme. Formation of the active enzyme involves a self-maturation process in which the active site pyruvoyl group is generated from an internal serine residue via an autocatalytic post-translational modification. Two non-identical subunits are generated from the proenzyme in this reaction, and the pyruvate is formed at the N-terminus of the alpha chain, which is derived from the carboxyl end of the proenzyme. The autoendoproteolytic cleavage occurs by a canonical serine protease mechanism, in which the side chain hydroxyl group of the serine supplies its oxygen atom to form the C-terminus of the beta chain, while the remainder of the serine residue undergoes an oxidative deamination to produce ammonia and the pyruvoyl prosthetic group on the alpha chain. During this reaction, the Ser that is part of the protease active site of the proenzyme becomes the pyruvoyl prosthetic group, which constitutes an essential element of the active site of the mature decarboxylase.

The protein localises to the cell membrane. The catalysed reaction is a 1,2-diacyl-sn-glycero-3-phospho-L-serine + H(+) = a 1,2-diacyl-sn-glycero-3-phosphoethanolamine + CO2. It functions in the pathway phospholipid metabolism; phosphatidylethanolamine biosynthesis; phosphatidylethanolamine from CDP-diacylglycerol: step 2/2. Catalyzes the formation of phosphatidylethanolamine (PtdEtn) from phosphatidylserine (PtdSer). The protein is Phosphatidylserine decarboxylase proenzyme of Salmonella typhi.